The primary structure comprises 450 residues: Deoxyguanosinetriphosphate triphosphohydrolase-like protein (450 aa).

Residues 61-274 form the HD domain; that stretch reads RLTHSLEVAQ…MELADDIAYA (214 aa).

Belongs to the dGTPase family. Type 2 subfamily.

This chain is Deoxyguanosinetriphosphate triphosphohydrolase-like protein, found in Histophilus somni (strain 2336) (Haemophilus somnus).